We begin with the raw amino-acid sequence, 347 residues long: MSSTLSDVFRSHPIHIPLSNPPDFKSLPDSYTWTPKDDLLFSASASDETLPLIDLSDIHVATLVGHACTTWGAFQITNHGVPSRLLDDIEFLTGSLFRLPVQRKLKAARSENGVSGYGVARIASFFNKKMWSEGFTVIGSPLHDFRKLWPSHHLKYCEIIEEYEEHMQKLAAKLMWFALGSLGVEEKDIQWAGPNSDFQGTQAVIQLNHYPKCPEPDRAMGLAAHTDSTLMTILYQNNTAGLQVFRDDVGWVTAPPVPGSLVVNVGDLLHILTNGIFPSVLHRARVNHVRSRFSMAYLWGPPSDIMISPLPKLVDPLQSPLYPSLTWKQYLATKATHFNQSLSIIRN.

The Fe2OG dioxygenase domain maps to 197–301 (DFQGTQAVIQ…RFSMAYLWGP (105 aa)). H225, D227, and H282 together coordinate Fe cation. R292 is a catalytic residue. 2-oxoglutarate is bound at residue R292.

Belongs to the iron/ascorbate-dependent oxidoreductase family. GA3OX subfamily. L-ascorbate is required as a cofactor. Fe(2+) serves as cofactor. In terms of tissue distribution, highly expressed in seedlings but also expressed in roots, leaves, stems, flowers, siliques and seeds. Detected predominantly in the hypocotyl and roots of young seedlings and in the petioles and vasculature of leaves. Not expressed in the shoot apical meristem, but found in the elongation zone, the quiescent center cells and the columella cells of the root tips. Found in the cortex and the endodermis of the embryo axis in germinating seeds.

The enzyme catalyses gibberellin A20 + 2-oxoglutarate + O2 = gibberellin A1 + succinate + CO2. Its pathway is plant hormone biosynthesis; gibberellin biosynthesis. In terms of biological role, converts the inactive gibberellin (GA) precursors GA9 and GA20 in the bioactives gibberellins GA4 and GA1. Involved in the production of bioactive GA for vegetative growth and development. This is Gibberellin 3-beta-dioxygenase 2 from Arabidopsis thaliana (Mouse-ear cress).